The following is a 428-amino-acid chain: Dihydroorotase (428 aa).

2 residues coordinate Zn(2+): His59 and His61. Substrate-binding positions include 61 to 63 (HFR) and Asn93. Asp151, His178, and His231 together coordinate Zn(2+). Residue Asn277 coordinates substrate. Asp304 is a binding site for Zn(2+). The active site involves Asp304. Residues His308 and 322–323 (FG) contribute to the substrate site.

The protein belongs to the metallo-dependent hydrolases superfamily. DHOase family. Class I DHOase subfamily. It depends on Zn(2+) as a cofactor.

It carries out the reaction (S)-dihydroorotate + H2O = N-carbamoyl-L-aspartate + H(+). It participates in pyrimidine metabolism; UMP biosynthesis via de novo pathway; (S)-dihydroorotate from bicarbonate: step 3/3. In terms of biological role, catalyzes the reversible cyclization of carbamoyl aspartate to dihydroorotate. The chain is Dihydroorotase from Bacillus licheniformis (strain ATCC 14580 / DSM 13 / JCM 2505 / CCUG 7422 / NBRC 12200 / NCIMB 9375 / NCTC 10341 / NRRL NRS-1264 / Gibson 46).